We begin with the raw amino-acid sequence, 110 residues long: HIT-like protein CPn_0488/CP_0266/CPj0488/CpB0508 (110 aa).

An HIT domain is found at V3 to A110. A Histidine triad motif motif is present at residues H95–H99.

This chain is HIT-like protein CPn_0488/CP_0266/CPj0488/CpB0508, found in Chlamydia pneumoniae (Chlamydophila pneumoniae).